The following is a 194-amino-acid chain: uncharacterized protein (194 aa).

This is an uncharacterized protein from Aquifex aeolicus (strain VF5).